The chain runs to 306 residues: UDP-3-O-acyl-N-acetylglucosamine deacetylase (306 aa).

Zn(2+) contacts are provided by histidine 78, histidine 237, and aspartate 241. Histidine 264 serves as the catalytic Proton donor.

Belongs to the LpxC family. Zn(2+) serves as cofactor.

It catalyses the reaction a UDP-3-O-[(3R)-3-hydroxyacyl]-N-acetyl-alpha-D-glucosamine + H2O = a UDP-3-O-[(3R)-3-hydroxyacyl]-alpha-D-glucosamine + acetate. The protein operates within glycolipid biosynthesis; lipid IV(A) biosynthesis; lipid IV(A) from (3R)-3-hydroxytetradecanoyl-[acyl-carrier-protein] and UDP-N-acetyl-alpha-D-glucosamine: step 2/6. Functionally, catalyzes the hydrolysis of UDP-3-O-myristoyl-N-acetylglucosamine to form UDP-3-O-myristoylglucosamine and acetate, the committed step in lipid A biosynthesis. The sequence is that of UDP-3-O-acyl-N-acetylglucosamine deacetylase from Aromatoleum aromaticum (strain DSM 19018 / LMG 30748 / EbN1) (Azoarcus sp. (strain EbN1)).